The following is a 511-amino-acid chain: Exodeoxyribonuclease 7 large subunit (511 aa).

The protein belongs to the XseA family. Heterooligomer composed of large and small subunits.

It is found in the cytoplasm. The enzyme catalyses Exonucleolytic cleavage in either 5'- to 3'- or 3'- to 5'-direction to yield nucleoside 5'-phosphates.. Its function is as follows. Bidirectionally degrades single-stranded DNA into large acid-insoluble oligonucleotides, which are then degraded further into small acid-soluble oligonucleotides. The chain is Exodeoxyribonuclease 7 large subunit from Brucella abortus (strain S19).